Here is a 419-residue protein sequence, read N- to C-terminus: D-mannonate dehydratase (419 aa).

Substrate-binding residues include Asn54 and His139. Catalysis depends on Tyr176, which acts as the Proton donor/acceptor. Asp227 lines the Mg(2+) pocket. The active-site Proton donor/acceptor is the His229. Mg(2+) is bound by residues Glu253 and Glu279. Substrate is bound by residues Glu279, Arg300, His329, Asp333, and Glu356.

This sequence belongs to the mandelate racemase/muconate lactonizing enzyme family. GalD subfamily. Requires Mg(2+) as cofactor.

The catalysed reaction is D-mannonate = 2-dehydro-3-deoxy-D-gluconate + H2O. The protein operates within carbohydrate metabolism; pentose and glucuronate interconversion. Catalyzes the dehydration of D-mannonate. Has no detectable activity with a panel of 70 other acid sugars (in vitro). The chain is D-mannonate dehydratase from Xanthomonas oryzae pv. oryzicola (strain BLS256).